The following is a 457-amino-acid chain: UDP-N-acetylglucosamine 1-carboxyvinyltransferase (457 aa).

34-35 (KN) provides a ligand contact to phosphoenolpyruvate. Arginine 104 is a binding site for UDP-N-acetyl-alpha-D-glucosamine. Cysteine 128 (proton donor) is an active-site residue. A 2-(S-cysteinyl)pyruvic acid O-phosphothioketal modification is found at cysteine 128. UDP-N-acetyl-alpha-D-glucosamine contacts are provided by aspartate 319 and isoleucine 341. The interval 436 to 457 (INKSKNRSSNSKLKEVSEIRAA) is disordered. The segment covering 447–457 (KLKEVSEIRAA) has biased composition (basic and acidic residues).

It belongs to the EPSP synthase family. MurA subfamily.

It is found in the cytoplasm. The enzyme catalyses phosphoenolpyruvate + UDP-N-acetyl-alpha-D-glucosamine = UDP-N-acetyl-3-O-(1-carboxyvinyl)-alpha-D-glucosamine + phosphate. Its pathway is cell wall biogenesis; peptidoglycan biosynthesis. Its function is as follows. Cell wall formation. Adds enolpyruvyl to UDP-N-acetylglucosamine. This chain is UDP-N-acetylglucosamine 1-carboxyvinyltransferase, found in Prochlorococcus marinus subsp. pastoris (strain CCMP1986 / NIES-2087 / MED4).